Here is a 182-residue protein sequence, read N- to C-terminus: Photosystem I assembly protein Ycf4 (182 aa).

2 helical membrane passes run 22–42 (WSSV…SSYL) and 63–83 (VMCF…LTIF).

It belongs to the Ycf4 family.

It localises to the plastid. It is found in the chloroplast thylakoid membrane. Seems to be required for the assembly of the photosystem I complex. The polypeptide is Photosystem I assembly protein Ycf4 (Oltmannsiellopsis viridis (Marine flagellate)).